Consider the following 156-residue polypeptide: MKCPFCQHDDTQVLDTRISEEGDSIRRRRRCVSCDKRFTTYERIELAMPVIVKKNGSRTDFDPKKLQASLQLALRKRPVSAEAVDAAIHRIEQKLLSSGEREVVSGQIGELVMRELQRLDKIAYIRFASVYKSFEDVAEFQDAIAEVGRERKPPSK.

Residues 3–34 (CPFCQHDDTQVLDTRISEEGDSIRRRRRCVSC) fold into a zinc finger. The ATP-cone domain occupies 49 to 139 (PVIVKKNGSR…VYKSFEDVAE (91 aa)).

Belongs to the NrdR family. The cofactor is Zn(2+).

In terms of biological role, negatively regulates transcription of bacterial ribonucleotide reductase nrd genes and operons by binding to NrdR-boxes. This Herminiimonas arsenicoxydans protein is Transcriptional repressor NrdR.